The primary structure comprises 773 residues: DEAD-box ATP-dependent RNA helicase 32 (773 aa).

The segment at 28–71 (IDAGKPARGTRPPPLSKSSSSPADTAAAKRGAKGAGGVPSKAAG) is disordered. Residues 43 to 56 (SKSSSSPADTAAAK) show a composition bias toward low complexity. Positions 80–108 (ARFDELPLSNKTKDGLRKAGYTEMSEIQR) match the Q motif motif. The Helicase ATP-binding domain occupies 111 to 287 (LPHALCGRDV…RVSLKDPEYI (177 aa)). 124-131 (AKTGSGKT) contributes to the ATP binding site. The DEAD box signature appears at 235 to 238 (DEAD). Positions 309–462 (PLEQKLNMLW…IKKPNTEQLQ (154 aa)) constitute a Helicase C-terminal domain. Positions 664–715 (DKDKISQRYAEMLREMQEHDKEDKLEHKRILREKKLQKKLKLKRKRNEEMDA) form a coiled coil. Over residues 699 to 708 (LQKKLKLKRK) the composition is skewed to basic residues. Positions 699–755 (LQKKLKLKRKRNEEMDAGSENSGSESDRDQRTASKGKKRYFNSDDEEGSKDAAKDGD) are disordered.

This sequence belongs to the DEAD box helicase family. DDX10/DBP4 subfamily.

The enzyme catalyses ATP + H2O = ADP + phosphate + H(+). This Oryza sativa subsp. japonica (Rice) protein is DEAD-box ATP-dependent RNA helicase 32.